Reading from the N-terminus, the 158-residue chain is Fucolectin (158 aa).

An F5/8 type C-like region spans residues 16-148 (KATQSAQLRG…TSESLHLCEV (133 aa)). The Ca(2+) site is built by N35, D38, N40, and S49. 3 disulfide bridges follow: C50-C146, C82-C83, and C108-C124. 2 residues coordinate alpha-L-fucose: H52 and R79. Residues 79-81 (RGD) carry the Cell attachment site motif. R86 serves as a coordination point for alpha-L-fucose. The Ca(2+) site is built by C146 and E147.

Belongs to the fucolectin family. Homotrimer.

The protein resides in the secreted. Its function is as follows. Acts as a defensive agent. Recognizes blood group fucosylated oligosaccharides including A, B, H and Lewis B-type antigens. Does not recognize Lewis A antigen and has low affinity for monovalent haptens. This chain is Fucolectin, found in Anguilla anguilla (European freshwater eel).